The sequence spans 308 residues: Elongation factor Ts (308 aa).

The interval 80 to 83 (TDFV) is involved in Mg(2+) ion dislocation from EF-Tu.

It belongs to the EF-Ts family.

The protein localises to the cytoplasm. Functionally, associates with the EF-Tu.GDP complex and induces the exchange of GDP to GTP. It remains bound to the aminoacyl-tRNA.EF-Tu.GTP complex up to the GTP hydrolysis stage on the ribosome. This Rhizobium johnstonii (strain DSM 114642 / LMG 32736 / 3841) (Rhizobium leguminosarum bv. viciae) protein is Elongation factor Ts.